The sequence spans 472 residues: WD repeat-containing protein 88 (472 aa).

A disordered region spans residues 1–22 (MASPPRCSPTAHDRECKLPPPS). WD repeat units follow at residues 100-139 (GHEH…VVRD), 143-182 (RPKA…LLWK), 184-224 (RYDT…TVSV), 228-267 (HHTR…TLLT), 271-310 (AHSN…FRNC), 319-358 (GHEG…RKLS), and 361-400 (GHND…EIPL). Positions 447-472 (LPADTSSSSSSSERENSPPPRGSKDD) are disordered. The span at 458-472 (SERENSPPPRGSKDD) shows a compositional bias: basic and acidic residues.

In Homo sapiens (Human), this protein is WD repeat-containing protein 88 (WDR88).